The primary structure comprises 224 residues: Biosynthetic peptidoglycan transglycosylase (224 aa).

A helical transmembrane segment spans residues 12–32 (ILVVLAILPVFLLLVYSLPFV).

This sequence belongs to the glycosyltransferase 51 family.

It localises to the cell inner membrane. It catalyses the reaction [GlcNAc-(1-&gt;4)-Mur2Ac(oyl-L-Ala-gamma-D-Glu-L-Lys-D-Ala-D-Ala)](n)-di-trans,octa-cis-undecaprenyl diphosphate + beta-D-GlcNAc-(1-&gt;4)-Mur2Ac(oyl-L-Ala-gamma-D-Glu-L-Lys-D-Ala-D-Ala)-di-trans,octa-cis-undecaprenyl diphosphate = [GlcNAc-(1-&gt;4)-Mur2Ac(oyl-L-Ala-gamma-D-Glu-L-Lys-D-Ala-D-Ala)](n+1)-di-trans,octa-cis-undecaprenyl diphosphate + di-trans,octa-cis-undecaprenyl diphosphate + H(+). It functions in the pathway cell wall biogenesis; peptidoglycan biosynthesis. Functionally, peptidoglycan polymerase that catalyzes glycan chain elongation from lipid-linked precursors. This is Biosynthetic peptidoglycan transglycosylase from Brucella melitensis biotype 1 (strain ATCC 23456 / CCUG 17765 / NCTC 10094 / 16M).